A 2298-amino-acid polypeptide reads, in one-letter code: Protein Ycf2 (2298 aa).

1637 to 1644 is a binding site for ATP; it reads GSIGTGRS.

Belongs to the Ycf2 family.

It localises to the plastid. Its subcellular location is the chloroplast stroma. Its function is as follows. Probable ATPase of unknown function. Its presence in a non-photosynthetic plant (Epifagus virginiana) and experiments in tobacco indicate that it has an essential function which is probably not related to photosynthesis. The chain is Protein Ycf2 from Lotus japonicus (Lotus corniculatus var. japonicus).